Here is a 330-residue protein sequence, read N- to C-terminus: UPF0324 membrane protein BT_4609 (330 aa).

10 helical membrane-spanning segments follow: residues 16–33 (IYVA…LDYI), 38–60 (AWSA…LTCG), 73–95 (YLLQ…LASG), 99–116 (MEFT…GWFI), 128–150 (SYLI…GPVL), 160–182 (ALGT…GHAL), 189–211 (FGTW…AAYG), 221–240 (IKLT…SFIF), 247–269 (ISIP…LLNG), and 284–306 (TLTI…SVGV).

This sequence belongs to the UPF0324 family.

It localises to the cell membrane. The chain is UPF0324 membrane protein BT_4609 from Bacteroides thetaiotaomicron (strain ATCC 29148 / DSM 2079 / JCM 5827 / CCUG 10774 / NCTC 10582 / VPI-5482 / E50).